We begin with the raw amino-acid sequence, 377 residues long: UDP-N-acetylglucosamine 2-epimerase (377 aa).

H212 is a catalytic residue.

This sequence belongs to the UDP-N-acetylglucosamine 2-epimerase family. Homodimer.

It catalyses the reaction UDP-N-acetyl-alpha-D-glucosamine + H2O = aldehydo-N-acetyl-D-mannosamine + UDP + H(+). Its function is as follows. Catalyzes the conversion of UDP-N-acetylglucosamine (UDP-GlcNAc) to UDP and N-acetyl-D-mannosamine (ManNAc). This Neisseria meningitidis serogroup B (strain ATCC BAA-335 / MC58) protein is UDP-N-acetylglucosamine 2-epimerase (siaA).